Consider the following 39-residue polypeptide: Photosystem II reaction center protein J (39 aa).

A helical membrane pass occupies residues 7 to 27 (IPLWIVAVVAGLGVITVVGLF).

The protein belongs to the PsbJ family. As to quaternary structure, PSII is composed of 1 copy each of membrane proteins PsbA, PsbB, PsbC, PsbD, PsbE, PsbF, PsbH, PsbI, PsbJ, PsbK, PsbL, PsbM, PsbT, PsbX, PsbY, PsbZ, Psb30/Ycf12, peripheral proteins PsbO, CyanoQ (PsbQ), PsbU, PsbV and a large number of cofactors. It forms dimeric complexes.

Its subcellular location is the cellular thylakoid membrane. In terms of biological role, one of the components of the core complex of photosystem II (PSII). PSII is a light-driven water:plastoquinone oxidoreductase that uses light energy to abstract electrons from H(2)O, generating O(2) and a proton gradient subsequently used for ATP formation. It consists of a core antenna complex that captures photons, and an electron transfer chain that converts photonic excitation into a charge separation. The chain is Photosystem II reaction center protein J from Synechococcus sp. (strain JA-2-3B'a(2-13)) (Cyanobacteria bacterium Yellowstone B-Prime).